We begin with the raw amino-acid sequence, 395 residues long: S-adenosylmethionine synthase 3 (395 aa).

A Mg(2+)-binding site is contributed by Glu10. An ATP-binding site is contributed by His16. Residue Glu44 participates in K(+) binding. Glu57 and Gln100 together coordinate L-methionine. ATP-binding positions include 168 to 170, 236 to 239, Asp247, 253 to 254, Ala270, Lys274, and Lys278; these read DGK, SGRF, and RK. Position 247 (Asp247) interacts with L-methionine. L-methionine is bound at residue Lys278.

The protein belongs to the AdoMet synthase family. In terms of assembly, homotetramer. Mn(2+) is required as a cofactor. Requires Mg(2+) as cofactor. The cofactor is Co(2+). K(+) serves as cofactor.

It is found in the cytoplasm. It carries out the reaction L-methionine + ATP + H2O = S-adenosyl-L-methionine + phosphate + diphosphate. Its pathway is amino-acid biosynthesis; S-adenosyl-L-methionine biosynthesis; S-adenosyl-L-methionine from L-methionine: step 1/1. Catalyzes the formation of S-adenosylmethionine from methionine and ATP. The reaction comprises two steps that are both catalyzed by the same enzyme: formation of S-adenosylmethionine (AdoMet) and triphosphate, and subsequent hydrolysis of the triphosphate. The chain is S-adenosylmethionine synthase 3 (METK3) from Populus trichocarpa (Western balsam poplar).